Reading from the N-terminus, the 89-residue chain is Small ribosomal subunit protein uS14 (89 aa).

The protein belongs to the universal ribosomal protein uS14 family. In terms of assembly, part of the 30S ribosomal subunit. Contacts proteins S3 and S10.

Binds 16S rRNA, required for the assembly of 30S particles and may also be responsible for determining the conformation of the 16S rRNA at the A site. This chain is Small ribosomal subunit protein uS14, found in Flavobacterium johnsoniae (strain ATCC 17061 / DSM 2064 / JCM 8514 / BCRC 14874 / CCUG 350202 / NBRC 14942 / NCIMB 11054 / UW101) (Cytophaga johnsonae).